A 736-amino-acid chain; its full sequence is MGEIATEFTPVMDDDDDRCVVPEVELTVPKTDDSTLPVLTFRMWVLGIGACIVLSFINQFFWYRTMPLSITGISAQIAVVPLGHLMARVLPTKRFLEGTRFQFTLNPGAFNVKEHVLITIFANSGAGSVYATHILSAIKLYYKRSLPFLPAFLVMITTQILGFGWAGLFRKHLVEPGEMWWPSNLVQVSLFGALHEKEKKSRGGMSRTQFFLIVLVASFAYYIFPGYLFTMLTSISWVCWLNPKSILVNQLGSGEHGLGIGSIGFDWVTISAYLGSPLASPLFASVNVAIGFVLVMYIVTPVCYWLNIYDAKTFPIFSSQLFMGNGSRYDVLSIIDSKFHLDRVVYSRTGSINMSTFFAVTYGLGFATLSATIVHVLVFNGSDLWKQTRGAFQKNKKMDIHTRIMKKNYREVPLWWFLVILLLNIALIMFISVHYNATVQLPWWGVLLACAIAISFTPLIGVIAATTNQAPGLNIITEYVIGYIYPERPVANMCFKVYGYISMTQALTFISDFKLGHYMKIPPRSMFMAQVAGTLVAVVVYTGTAWWLMEEIPHLCDTSLLPSDSQWTCPMDRVFFDASVIWGLVGPRRVFGDLGEYSNVNWFFLVGAIAPLLVWLATKMFPAQTWIAKIHIPVLVGATAMMPPATAVNFTSWLIVAFIFGHFIFKYRRVWWTKYNYVLSGGLDAGSAFMTILLFLALGRKGIEVQWWGNSGDRDTCPLASCPTAKGVVVKGCPVF.

Helical transmembrane passes span 43–63 (MWVL…FFWY), 66–86 (MPLS…GHLM), 116–136 (VLIT…HILS), 148–168 (FLPA…WAGL), 210–230 (FFLI…YLFT), 258–278 (LGIG…GSPL), 288–308 (VAIG…WLNI), 357–377 (FFAV…VHVL), 412–432 (VPLW…MFIS), 443–463 (WWGV…IGVI), 489–511 (PVAN…TFIS), 527–547 (FMAQ…TAWW), 602–622 (WFFL…KMFP), 645–665 (ATAV…HFIF), and 678–698 (VLSG…FLAL).

This sequence belongs to the oligopeptide OPT transporter (TC 2.A.67.1) family. In terms of tissue distribution, expressed in flowers and roots, and at a low level in leaves and stems. Detected in the cambial zone of the vascular bundles and in the region of lateral root initiation. Low expression in the vascular network of the petals and high in the stamen filaments and the gynoecium.

The protein resides in the membrane. In terms of biological role, involved in the translocation of tetra- and pentapeptides across the cellular membrane in an energy-dependent manner. Also involved in transport of glutathione derivatives and metal complexes, and may be involved in stress resistance. The sequence is that of Oligopeptide transporter 6 (OPT6) from Arabidopsis thaliana (Mouse-ear cress).